Reading from the N-terminus, the 148-residue chain is uncharacterized protein (148 aa).

One can recognise an HTH asnC-type domain in the interval 3–64 (LDALDRKILE…KLNYESIGYD (62 aa)). The H-T-H motif DNA-binding region spans 22 to 41 (YREIAKDLNVAVGTIYNRIK).

This is an uncharacterized protein from Pyrococcus horikoshii (strain ATCC 700860 / DSM 12428 / JCM 9974 / NBRC 100139 / OT-3).